The sequence spans 174 residues: Shikimate kinase 2 (174 aa).

Residue 12-17 (GAGKTT) participates in ATP binding. Mg(2+) is bound by residues Thr16 and Asp32. Residues Asp34, Arg58, and Gly79 each coordinate substrate. The interval 112-126 (AEDPEEAQRPSLTGK) is LID domain. Position 120 (Arg120) interacts with ATP. Residue Arg139 participates in substrate binding. Gln155 is a binding site for ATP.

Belongs to the shikimate kinase family. AroL subfamily. As to quaternary structure, monomer. Mg(2+) serves as cofactor.

It localises to the cytoplasm. It carries out the reaction shikimate + ATP = 3-phosphoshikimate + ADP + H(+). It participates in metabolic intermediate biosynthesis; chorismate biosynthesis; chorismate from D-erythrose 4-phosphate and phosphoenolpyruvate: step 5/7. Its function is as follows. Catalyzes the specific phosphorylation of the 3-hydroxyl group of shikimic acid using ATP as a cosubstrate. This Yersinia pestis bv. Antiqua (strain Antiqua) protein is Shikimate kinase 2.